Consider the following 194-residue polypeptide: Calcium channel flower (194 aa).

3 helical membrane-spanning segments follow: residues 34–54 (LLGI…VFSI), 59–79 (VSCL…MLLE), and 107–127 (GLYI…ASLF).

It belongs to the calcium channel flower family. In terms of assembly, homomultimer. Associates with the dally/ magu complex.

The protein localises to the cell membrane. Its subcellular location is the cytoplasmic vesicle. It is found in the secretory vesicle. It localises to the synaptic vesicle membrane. The protein resides in the presynaptic cell membrane. The protein localises to the endosome. Its activity is regulated as follows. Channel activity is inhibited by La(3+), which reduces Ca(2+) influx and thus inhibits it's function in promoting activity-dependent bulk endocytosis (ADBE) in response to high stimuli. Transmembrane protein which mediates synaptic endocytosis, fitness-based cell culling, neuronal culling, morphogen gradient scaling, and calcium transport. Regulates synaptic endocytosis and hence couples exo- with endocytosis. Controls two major modes of synaptic vesicle (SV) endocytosis in the synaptic boutons of neuromuscular junctions (NMJs); Ca(2+) channel-independent Clathrin-mediated endocytosis (CME) in response to mild stimulation, and Ca(2+) channel-dependent activity-dependent bulk endocytosis (ADBE) in response to strong stimulation. Functions in ADBE and subsequent SV reformation from bulk endosomes by initiating Ca(2+) channel-dependent phosphatidylinositol 4,5-bisphosphate (PtdIns(4,5)P2) compartmentalization in synaptic boutons. There it acts at the periactive zone to provide the low Ca(2+) levels required to initiate Calcineurin activation and upregulate PtdIns(4,5)P2. Conversely PtdIns(4,5)P2 enhances fwe Ca(2+) channel-activity, establishing a positive feedback loop that induces PtdIns(4,5)P2 microdomain at the periactive zone. These microdomains trigger bulk membrane invagination (i.e. ADBE) by triggering actin polymerization while also promoting localization of fwe to bulk endosomes, thereby removing the ADBE trigger to reduce endocytosis and prevent excess membrane uptake. PtdIns(4,5)P2 then promotes SV reformation from the bulk endosomes, to coordinate ADBE and subsequent SV reformation. Different combinations of the flower isoforms at the cell membrane are also required for the identification and elimination of suboptimal or supernumerary cells during development, regeneration, and adulthood. Required for the recognition and elimination of unfit cells in the developing wing during cell competition. In the developing pupal retina, mediates the elimination of unwanted postmitotic neurons, including supernumerary photoreceptor neurons that form at the periphery of the retina and are contained within incomplete ommatidia units. Also required for efficient elimination and replacement of old neurons by newly generated neurons during regeneration in the adult brain following mechanical injury. Downstream of the flower fitness fingerprints, cells identified as unwanted or unfit are eliminated via apoptosis through the expression of ahuizotl (azot). However, the cells marked for elimination by the flower isoforms only undergo apoptosis if additional thresholds are met; (1) their neighboring fit/healthy cells express different levels of the fwe isoforms, and (2) the levels of the protective signal SPARC expressed by the loser or unwanted cells are unable to inhibit caspase activation. These additional thresholds for flower-mediated apoptosis, allows useful cells to recover from transient and limited stress before they are unnecessarily eliminated. Functions with dally and magu in a mechanism of scaling, which utilises apoptosis to ensure that the dpp morphogen gradient, which mediates organ growth, remains proportional to the size of the growing wing. In this mechanism, fwe represses dally- and Magu-dependent activity in expanding the gradient, and dally/Magu inhibits fwe-dependent apoptosis to keep cell death rate low. When the levels of these different proteins are optimally regulated the gradient correctly scales with organ growth but when this fails, fwe-mediated apoptosis is activated to trim the developing tissue to match the correct size of the gradient. The polypeptide is Calcium channel flower (Drosophila erecta (Fruit fly)).